Reading from the N-terminus, the 464-residue chain is Argininosuccinate lyase 2 (464 aa).

This sequence belongs to the lyase 1 family. Argininosuccinate lyase subfamily.

The protein localises to the cytoplasm. It catalyses the reaction 2-(N(omega)-L-arginino)succinate = fumarate + L-arginine. Its pathway is amino-acid biosynthesis; L-arginine biosynthesis; L-arginine from L-ornithine and carbamoyl phosphate: step 3/3. The sequence is that of Argininosuccinate lyase 2 from Pseudomonas fluorescens (strain Pf0-1).